The sequence spans 407 residues: Phosphopentomutase (407 aa).

The Mn(2+) site is built by aspartate 10, aspartate 306, histidine 311, aspartate 347, histidine 348, and histidine 359.

The protein belongs to the phosphopentomutase family. Requires Mn(2+) as cofactor.

The protein resides in the cytoplasm. The enzyme catalyses 2-deoxy-alpha-D-ribose 1-phosphate = 2-deoxy-D-ribose 5-phosphate. It catalyses the reaction alpha-D-ribose 1-phosphate = D-ribose 5-phosphate. Its pathway is carbohydrate degradation; 2-deoxy-D-ribose 1-phosphate degradation; D-glyceraldehyde 3-phosphate and acetaldehyde from 2-deoxy-alpha-D-ribose 1-phosphate: step 1/2. Functionally, isomerase that catalyzes the conversion of deoxy-ribose 1-phosphate (dRib-1-P) and ribose 1-phosphate (Rib-1-P) to deoxy-ribose 5-phosphate (dRib-5-P) and ribose 5-phosphate (Rib-5-P), respectively. The sequence is that of Phosphopentomutase from Yersinia pestis bv. Antiqua (strain Angola).